A 406-amino-acid polypeptide reads, in one-letter code: Succinylornithine transaminase (406 aa).

N6-(pyridoxal phosphate)lysine is present on lysine 252.

This sequence belongs to the class-III pyridoxal-phosphate-dependent aminotransferase family. AstC subfamily. Pyridoxal 5'-phosphate is required as a cofactor.

It catalyses the reaction N(2)-succinyl-L-ornithine + 2-oxoglutarate = N-succinyl-L-glutamate 5-semialdehyde + L-glutamate. The protein operates within amino-acid degradation; L-arginine degradation via AST pathway; L-glutamate and succinate from L-arginine: step 3/5. Its function is as follows. Catalyzes the transamination of N(2)-succinylornithine and alpha-ketoglutarate into N(2)-succinylglutamate semialdehyde and glutamate. Can also act as an acetylornithine aminotransferase. This is Succinylornithine transaminase from Escherichia coli O45:K1 (strain S88 / ExPEC).